The primary structure comprises 227 residues: Urease accessory protein UreF (227 aa).

The protein belongs to the UreF family. As to quaternary structure, ureD, UreF and UreG form a complex that acts as a GTP-hydrolysis-dependent molecular chaperone, activating the urease apoprotein by helping to assemble the nickel containing metallocenter of UreC. The UreE protein probably delivers the nickel.

The protein localises to the cytoplasm. Required for maturation of urease via the functional incorporation of the urease nickel metallocenter. The sequence is that of Urease accessory protein UreF from Methylobacillus flagellatus (strain ATCC 51484 / DSM 6875 / VKM B-1610 / KT).